The chain runs to 20 residues: Short cationic peptide-4c (20 aa).

Residue glutamate 20 is modified to Glutamic acid 1-amide.

As to expression, expressed by the venom gland.

It localises to the secreted. The sequence is that of Short cationic peptide-4c from Cupiennius salei (American wandering spider).